The sequence spans 677 residues: Galactocerebrosidase (677 aa).

Positions methionine 1–alanine 33 are cleaved as a signal peptide. Residues threonine 101, tryptophan 143, and asparagine 189 each contribute to the substrate site. Glutamate 190 serves as the catalytic Proton donor/acceptor. The active-site Nucleophile is glutamate 265. Residues cysteine 278 and cysteine 385 are joined by a disulfide bond. Residues asparagine 291, asparagine 370, and asparagine 381 are each glycosylated (N-linked (GlcNAc...) asparagine). Arginine 387 lines the substrate pocket. Residues asparagine 394, asparagine 399, asparagine 424, asparagine 441, asparagine 509, asparagine 549, and asparagine 630 are each glycosylated (N-linked (GlcNAc...) asparagine).

It belongs to the glycosyl hydrolase 59 family.

It is found in the lysosome. The enzyme catalyses a beta-D-galactosyl-(1&lt;-&gt;1')-N-acylsphing-4-enine + H2O = an N-acylsphing-4-enine + D-galactose. It catalyses the reaction beta-D-galactosyl-(1&lt;-&gt;1)-sphing-4-enine + H2O = sphing-4-enine + D-galactose. It carries out the reaction a D-galactosylceramide + H2O = an N-acyl-sphingoid base + D-galactose. Its function is as follows. Hydrolyzes the galactose ester bonds of glycolipids such as galactosylceramide and galactosylsphingosine. This Xenopus laevis (African clawed frog) protein is Galactocerebrosidase.